The chain runs to 224 residues: MKIVVPIMPRNLEEVEAIDVERLAEADIVEWRADYLLKDDILRVAPAIFEKCSGKEVVFTIRTTREGGHLDLDDQEYVNVIKEVATLYQPDYIDFEYYSYKSVFEQMLEFPNLVLSYHNFEETPSNYMEIMSELTSLSPAVVKMAVMAKTEQDVLDVMNYTRGFKSLNTEQIFATIAMGELGKLTRIAGVITGSCWTFASLDETSAPGQMSLSNTRKFLEILEN.

3-dehydroquinate contacts are provided by residues 30-32 (EWR) and arginine 62. Histidine 118 serves as the catalytic Proton donor/acceptor. Lysine 143 (schiff-base intermediate with substrate) is an active-site residue. 3-dehydroquinate-binding residues include arginine 186, serine 205, and glutamine 209.

Belongs to the type-I 3-dehydroquinase family. As to quaternary structure, homodimer.

The enzyme catalyses 3-dehydroquinate = 3-dehydroshikimate + H2O. It functions in the pathway metabolic intermediate biosynthesis; chorismate biosynthesis; chorismate from D-erythrose 4-phosphate and phosphoenolpyruvate: step 3/7. Involved in the third step of the chorismate pathway, which leads to the biosynthesis of aromatic amino acids. Catalyzes the cis-dehydration of 3-dehydroquinate (DHQ) and introduces the first double bond of the aromatic ring to yield 3-dehydroshikimate. The sequence is that of 3-dehydroquinate dehydratase from Streptococcus suis (strain 98HAH33).